Consider the following 74-residue polypeptide: Brevinin-2CG1 (74 aa).

The first 22 residues, 1–22 (MFTMKKSMLVLFFLGTISLSLC), serve as a signal peptide directing secretion. The propeptide at 23 to 39 (EEERNADEDDGEMTEEV) is removed in mature form. The cysteines at positions 68 and 74 are disulfide-linked.

In terms of tissue distribution, expressed by the skin glands.

It is found in the secreted. In terms of biological role, antimicrobial peptide active against a variety of Gram-positive and some Gram-negative bacterial strains. Has antifungal activity against a slime mold isolate. Has hemolytic activity against human erythrocytes. This Amolops chunganensis (Chungan torrent frog) protein is Brevinin-2CG1.